A 618-amino-acid chain; its full sequence is Proline--tRNA ligase (618 aa).

The protein belongs to the class-II aminoacyl-tRNA synthetase family. ProS type 1 subfamily. As to quaternary structure, homodimer.

It localises to the cytoplasm. It carries out the reaction tRNA(Pro) + L-proline + ATP = L-prolyl-tRNA(Pro) + AMP + diphosphate. Functionally, catalyzes the attachment of proline to tRNA(Pro) in a two-step reaction: proline is first activated by ATP to form Pro-AMP and then transferred to the acceptor end of tRNA(Pro). As ProRS can inadvertently accommodate and process non-cognate amino acids such as alanine and cysteine, to avoid such errors it has two additional distinct editing activities against alanine. One activity is designated as 'pretransfer' editing and involves the tRNA(Pro)-independent hydrolysis of activated Ala-AMP. The other activity is designated 'posttransfer' editing and involves deacylation of mischarged Ala-tRNA(Pro). The misacylated Cys-tRNA(Pro) is not edited by ProRS. This chain is Proline--tRNA ligase, found in Streptococcus pyogenes serotype M12 (strain MGAS2096).